Reading from the N-terminus, the 170-residue chain is Two-component response regulator ORR6 (170 aa).

The Response regulatory domain occupies 51–170; it reads HVLAVDDSSV…DVSRLCSRIR (120 aa). A 4-aspartylphosphate modification is found at D103.

Belongs to the ARR family. Type-A subfamily. Two-component system major event consists of a His-to-Asp phosphorelay between a sensor histidine kinase (HK) and a response regulator (RR). In plants, the His-to-Asp phosphorelay involves an additional intermediate named Histidine-containing phosphotransfer protein (HPt). This multistep phosphorelay consists of a His-Asp-His-Asp sequential transfer of a phosphate group between first a His and an Asp of the HK protein, followed by the transfer to a conserved His of the HPt protein and finally the transfer to an Asp in the receiver domain of the RR protein. In terms of tissue distribution, expressed in roots, leaf blades, leaf sheaths, shoot apex, flowers and panicles.

Functionally, functions as a response regulator involved in His-to-Asp phosphorelay signal transduction system. Phosphorylation of the Asp residue in the receiver domain activates the ability of the protein to promote the transcription of target genes. Type-A response regulators seem to act as negative regulators of the cytokinin signaling. The polypeptide is Two-component response regulator ORR6 (Oryza sativa subsp. japonica (Rice)).